We begin with the raw amino-acid sequence, 528 residues long: Ecdysteroid UDP-glucosyltransferase (528 aa).

The signal sequence occupies residues 1 to 32 (MGHLHIVHWRLTMNGAIAALFLCLVMVHQQHA).

Belongs to the UDP-glycosyltransferase family.

Functionally, catalyzes the transfer of glucose from UDP-glucose to ecdysteroids which are insect molting hormones. Expression of egt interferes with normal insect development and block molting. The chain is Ecdysteroid UDP-glucosyltransferase (EGT) from Mamestra brassicae nuclear polyhedrosis virus (MbNPV).